A 132-amino-acid polypeptide reads, in one-letter code: Small ribosomal subunit protein uS8 (132 aa).

Belongs to the universal ribosomal protein uS8 family. Part of the 30S ribosomal subunit. Contacts proteins S5 and S12.

Functionally, one of the primary rRNA binding proteins, it binds directly to 16S rRNA central domain where it helps coordinate assembly of the platform of the 30S subunit. This is Small ribosomal subunit protein uS8 from Bartonella henselae (strain ATCC 49882 / DSM 28221 / CCUG 30454 / Houston 1) (Rochalimaea henselae).